Consider the following 794-residue polypeptide: Zinc finger protein 148 (794 aa).

K6 is covalently cross-linked (Glycyl lysine isopeptide (Lys-Gly) (interchain with G-Cter in SUMO2)). S51 bears the Phosphoserine mark. Residues K88, K115, and K132 each participate in a glycyl lysine isopeptide (Lys-Gly) (interchain with G-Cter in SUMO2) cross-link. The C2H2-type 1 zinc finger occupies 171 to 193 (HVCEHCNAAFRTNYHLQRHVFIH). Phosphothreonine is present on T194. C2H2-type zinc fingers lie at residues 199 to 221 (FQCS…EKIH) and 227 to 249 (FRCD…KRTH). At S250 the chain carries Phosphoserine. The segment at 255–278 (YQCEYCLQYFSRTDRVLKHKRMCH) adopts a C2H2-type 4 zinc-finger fold. A Glycyl lysine isopeptide (Lys-Gly) (interchain with G-Cter in SUMO2) cross-link involves residue K291. A disordered region spans residues 298 to 336 (EEDSGFSTSPKDNSLPKKKRQKTEKKSSGMDKESALDKS). A phosphoserine mark is found at S301 and S306. K308 is covalently cross-linked (Glycyl lysine isopeptide (Lys-Gly) (interchain with G-Cter in SUMO2)). Over residues 321–336 (EKKSSGMDKESALDKS) the composition is skewed to basic and acidic residues. A Glycyl lysine isopeptide (Lys-Gly) (interchain with G-Cter in SUMO1); alternate cross-link involves residue K356. K356 is covalently cross-linked (Glycyl lysine isopeptide (Lys-Gly) (interchain with G-Cter in SUMO2); alternate). Residue K402 forms a Glycyl lysine isopeptide (Lys-Gly) (interchain with G-Cter in SUMO2) linkage. Position 412 is a phosphoserine (S412). Glycyl lysine isopeptide (Lys-Gly) (interchain with G-Cter in SUMO2) cross-links involve residues K421 and K424. Positions 574 to 588 (NSSEVPEVTPSENVG) are enriched in polar residues. The segment at 574–596 (NSSEVPEVTPSENVGSSSQASSS) is disordered. K607 carries the N6-acetyllysine modification. Phosphoserine occurs at positions 665 and 784.

The protein belongs to the krueppel C2H2-type zinc-finger protein family. As to quaternary structure, interacts with HNRNPDL. Interacts with the 5FMC complex; the interaction requires association with CHTOP. Interacts with CAVIN1. Sumoylated with SUMO2. Desumoylated by SENP3, resulting in the stimulation of transcription of its target genes.

It is found in the nucleus. Involved in transcriptional regulation. Represses the transcription of a number of genes including gastrin, stromelysin and enolase. Binds to the G-rich box in the enhancer region of these genes. The polypeptide is Zinc finger protein 148 (ZNF148) (Homo sapiens (Human)).